The following is a 322-amino-acid chain: MRRILNKESDRFTLYPILYPDVFPFYKKAEACFWTAEEIDYSSDLKDFEKLNENEKHFIKHVLAFFAASDGIVLENLAVSFLREVQITEAKKFYSFQIAVENIHSETYSLLIDNYIKDEKERLNLFHAIENIPAVKNKALWAAKWINDTNSFAERIVANACVEGILFSGSFCAIFWFKKQNKLHGLTFSNELISRDEGLHTDFNCLIYSLLDNKLPEQMVQNIVKEAGGVEVEKSFICESLPCDLIGMNSRLMSQYIEFVADRLLECLGCSKIFHSKNPFNWMDLISLQGKTNFFEKRVADYQKSGVMAQRKDHVFCLNTEF.

Residues Asp70, Glu101, and His104 each coordinate Fe cation. Residue Tyr108 is part of the active site. Residues Glu163, Glu197, and His200 each contribute to the Fe cation site.

Belongs to the ribonucleoside diphosphate reductase small chain family. As to quaternary structure, heterodimer of a large and a small subunit. The cofactor is Fe cation.

The catalysed reaction is a 2'-deoxyribonucleoside 5'-diphosphate + [thioredoxin]-disulfide + H2O = a ribonucleoside 5'-diphosphate + [thioredoxin]-dithiol. Its function is as follows. Provides the precursors necessary for DNA synthesis. Catalyzes the biosynthesis of deoxyribonucleotides from the corresponding ribonucleotides. The chain is Ribonucleoside-diphosphate reductase small subunit (RNR2) from Plasmodium falciparum (isolate FCR-3 / Gambia).